The sequence spans 297 residues: Nucleotide-binding protein DSY4845 (297 aa).

13–20 is an ATP binding site; sequence GLSGAGKT. GTP is bound at residue 64–67; that stretch reads DLRG.

This sequence belongs to the RapZ-like family.

Functionally, displays ATPase and GTPase activities. In Desulfitobacterium hafniense (strain Y51), this protein is Nucleotide-binding protein DSY4845.